A 230-amino-acid polypeptide reads, in one-letter code: Endonuclease NucS (230 aa).

It belongs to the NucS endonuclease family.

It is found in the cytoplasm. Cleaves both 3' and 5' ssDNA extremities of branched DNA structures. The polypeptide is Endonuclease NucS (Corynebacterium glutamicum (strain ATCC 13032 / DSM 20300 / JCM 1318 / BCRC 11384 / CCUG 27702 / LMG 3730 / NBRC 12168 / NCIMB 10025 / NRRL B-2784 / 534)).